A 519-amino-acid chain; its full sequence is Na(+)/H(+) exchange regulatory cofactor NHE-RF3 (519 aa).

Residues 9–90 (ECKLSKQEGQ…SVTLLVLDGD (82 aa)) form the PDZ 1 domain. A phosphoserine mark is found at S108, S148, S192, S250, S334, and S348. 2 consecutive PDZ domains span residues 134–215 (RLCY…VDKE) and 243–323 (IVEM…VDKE). The segment at 347–374 (GSVKEAPAPTPTSLEVSSPPDTTEEVDH) is disordered. Residues 357–367 (PTSLEVSSPPD) are compositionally biased toward polar residues. The PDZ 4 domain maps to 378–458 (LCRLAKGENG…NVTLLVCGKK (81 aa)). T451 carries the phosphothreonine modification. Residues 479-519 (DTPPDSKEGIVVESNHDSHMAKERAHSTASHSSSNSEDTEM) form a disordered region. The span at 482–504 (PDSKEGIVVESNHDSHMAKERAH) shows a compositional bias: basic and acidic residues. S492, S508, S510, S511, S512, and S514 each carry phosphoserine. Over residues 505–519 (STASHSSSNSEDTEM) the composition is skewed to low complexity.

This sequence belongs to the NHER family. In terms of assembly, interacts with PDZK1IP1 and ABCC2. Interacts (via PDZ domains 1 and 3) with SCARB1 (C-terminal domain). Forms a heterodimeric complex with NHERF1. Interacts with AKAP2, BCR, CFTR, SLC22A12, SLC22A4, SLC22A5, NHERF2 and SLC17A1. Component of a complex, composed of PDZK1, SYNGAP1, KLHL17 and NMDA receptors. Interacts (via PDZ1 domain) directly with KLHL17; the interaction is important for integrity of actin cytoskeleton structures in neurons. Interacts (via the first PDZ domain) with PTGIR (via non-isoprenylated C-terminus). Interacts (via C-terminal PDZ domain) with SLC26A6 (via C-terminal domain). Interacts (via C-terminal PDZ domain) with SLC9A3 (via C-terminal domain). Interacts (via PDZ domains 1 and 3) with SLC5A8 (via PDZ-binding motif); interaction increases nicotinate transport activity of SLC5A8. In terms of tissue distribution, expression is limited to epithelial cells. Expressed in the kidney (brush border of proximal tubule), pancreas, liver, and small intestine. Expressed at a lower level in the adrenal cortex, testis and stomach. Overexpressed in breast, renal and lung carcinomas.

It is found in the membrane. The protein localises to the cell membrane. Functionally, a scaffold protein that connects plasma membrane proteins and regulatory components, regulating their surface expression in epithelial cells apical domains. May be involved in the coordination of a diverse range of regulatory processes for ion transport and second messenger cascades. In complex with NHERF1, may cluster proteins that are functionally dependent in a mutual fashion and modulate the trafficking and the activity of the associated membrane proteins. May play a role in the cellular mechanisms associated with multidrug resistance through its interaction with ABCC2 and PDZK1IP1. May potentiate the CFTR chloride channel activity. Required for normal cell-surface expression of SCARB1. Plays a role in maintaining normal plasma cholesterol levels via its effects on SCARB1. Plays a role in the normal localization and function of the chloride-anion exchanger SLC26A6 to the plasma membrane in the brush border of the proximal tubule of the kidney. May be involved in the regulation of proximal tubular Na(+)-dependent inorganic phosphate cotransport therefore playing an important role in tubule function. The chain is Na(+)/H(+) exchange regulatory cofactor NHE-RF3 (PDZK1) from Homo sapiens (Human).